A 165-amino-acid polypeptide reads, in one-letter code: Choriogonadotropin subunit beta 7 (165 aa).

Residues 1-20 form the signal peptide; it reads MEMFQGLLLLLLLSMGGTWA. Disulfide bonds link Cys29/Cys77, Cys43/Cys92, Cys46/Cys130, Cys54/Cys108, Cys58/Cys110, and Cys113/Cys120. N-linked (GlcNAc...) asparagine glycosylation is found at Asn33 and Asn50. The interval 131–165 is disordered; sequence DDPRFQASSSSKAPPPSLPSPSRLPGPSDTPILPQ. O-linked (GalNAc...) serine glycosylation is found at Ser141, Ser147, Ser152, and Ser158. A compositionally biased stretch (pro residues) spans 143–154; sequence APPPSLPSPSRL.

This sequence belongs to the glycoprotein hormones subunit beta family. Heterodimer of a common alpha chain identical in LH, FSH, TSH and HCG and a unique beta chain distinct in each of the hormones and confers receptor and biological specificity. High expression in the placenta throughout pregnancy.

The protein resides in the secreted. Its function is as follows. Beta subunit of the human chorionic gonadotropin (hCG). hCG is a complex glycoprotein composed of two glycosylated subunits alpha and beta which are non-covalently associated. The alpha subunit is identical to those in the pituitary gonadotropin hormones (LH, FSH and TSH). The beta subunits are distinct in each of the hormones and confer receptor and biological specificity. Has an essential role for pregnancy and maternal adaptation. Stimulates the ovaries to synthesize the steroids that are essential for the maintenance of pregnancy. This Homo sapiens (Human) protein is Choriogonadotropin subunit beta 7.